Here is a 515-residue protein sequence, read N- to C-terminus: Maturase K (515 aa).

The protein belongs to the intron maturase 2 family. MatK subfamily.

It localises to the plastid. The protein resides in the chloroplast. Usually encoded in the trnK tRNA gene intron. Probably assists in splicing its own and other chloroplast group II introns. This is Maturase K from Pinus clausa (Sand pine).